We begin with the raw amino-acid sequence, 145 residues long: Fluoride-specific ion channel FluC 2 (145 aa).

The next 4 membrane-spanning stretches (helical) occupy residues 16 to 36 (MLLV…LSAA), 42 to 62 (VISV…GWLL), 80 to 100 (LFAG…AVDT), and 113 to 133 (ILYA…GIAL). Na(+) is bound by residues G88 and T91.

Belongs to the fluoride channel Fluc/FEX (TC 1.A.43) family.

It localises to the cell membrane. The enzyme catalyses fluoride(in) = fluoride(out). Its activity is regulated as follows. Na(+) is not transported, but it plays an essential structural role and its presence is essential for fluoride channel function. Fluoride-specific ion channel. Important for reducing fluoride concentration in the cell, thus reducing its toxicity. This chain is Fluoride-specific ion channel FluC 2, found in Leifsonia xyli subsp. xyli (strain CTCB07).